A 320-amino-acid polypeptide reads, in one-letter code: Dual oxidase maturation factor 2 (320 aa).

The Extracellular segment spans residues 1-21; that stretch reads MTLWNGVLPFYPQPRHAAGFS. A helical membrane pass occupies residues 22-42; it reads VPLLIVILVFLALAASFLLIL. Residues 43-56 are Cytoplasmic-facing; the sequence is PGIRGHSRWFWLVR. A helical transmembrane segment spans residues 57–77; it reads VLLSLFIGAEIVAVHFSAEWF. At 78 to 183 the chain is on the extracellular side; it reads VGTVNTNTSY…HLAGHYASAT (106 aa). 3 N-linked (GlcNAc...) asparagine glycosylation sites follow: Asn-84, Asn-109, and Asn-121. A helical transmembrane segment spans residues 184–204; sequence LWVAFCFWLLSNVLLSTPAPL. At 205–206 the chain is on the cytoplasmic side; the sequence is YG. A helical transmembrane segment spans residues 207 to 227; it reads GLALLTTGAFALFGVFALASI. The Extracellular segment spans residues 228–247; the sequence is SSVPLCPLRLGSSALTTQYG. Residues 248–268 form a helical membrane-spanning segment; it reads AAFWVTLATGVLCLFLGGAVV. Over 269 to 320 the chain is Cytoplasmic; that stretch reads SLQYVRPSALRTLLDQSAKDCSQERGGSPLILGDPLHKQAALPDLKCITTNL.

The protein belongs to the DUOXA family. Heterodimer with DUXA2; disulfide-linked. Interacts with CSNK1G2. In terms of processing, N-glycosylated. In terms of tissue distribution, specifically expressed in thyroid. Also detected in salivary glands.

Its subcellular location is the endoplasmic reticulum membrane. In terms of biological role, required for the maturation and the transport from the endoplasmic reticulum to the plasma membrane of functional DUOX2. May play a role in thyroid hormone synthesis. This Homo sapiens (Human) protein is Dual oxidase maturation factor 2 (DUOXA2).